Consider the following 371-residue polypeptide: Dihydroorotate dehydrogenase (quinone) (371 aa).

FMN contacts are provided by residues 79–83 and threonine 103; that span reads AGFDK. Lysine 83 is a substrate binding site. A substrate-binding site is contributed by 128-132; the sequence is NRMGF. Positions 156 and 189 each coordinate FMN. Residue asparagine 189 participates in substrate binding. Serine 192 functions as the Nucleophile in the catalytic mechanism. Asparagine 194 contacts substrate. Lysine 225 and threonine 253 together coordinate FMN. 254 to 255 provides a ligand contact to substrate; it reads NT. FMN is bound by residues glycine 279, glycine 308, and 329–330; that span reads YT.

The protein belongs to the dihydroorotate dehydrogenase family. Type 2 subfamily. As to quaternary structure, monomer. Requires FMN as cofactor.

The protein resides in the cell membrane. It carries out the reaction (S)-dihydroorotate + a quinone = orotate + a quinol. It functions in the pathway pyrimidine metabolism; UMP biosynthesis via de novo pathway; orotate from (S)-dihydroorotate (quinone route): step 1/1. In terms of biological role, catalyzes the conversion of dihydroorotate to orotate with quinone as electron acceptor. In Corynebacterium glutamicum (strain R), this protein is Dihydroorotate dehydrogenase (quinone).